Reading from the N-terminus, the 667-residue chain is MDCRLHLVLFFSCVCLICLSGQQETGFVYNGFHQEDLFIDGIAMILPGGLLQLTNASQLKIGHAFFKQPFGFDPSSSLSFYTHFVCALVPPKFGAEVGHGMAFVVSPSMNFSHAFPTQYLGVFNSSTNVTSSSHLLAIELDTVETVDFHDLEKAHVGIDVNNPISIESALPSYFSDALGKNISINLVSGEPVQVWIDYDGSLLNVTLAPIEIQKPNRPLISRDINLSEIFQDKMYIGFSGSNGRLTSNQYILGWSFSKSKEFMQSLDLSKLPQAPIPRNEQAPVPREEKKKLHPLLIGLVILLVIPVLMVLGGVYWYRRKKYAEVKESWEKEYGPHRYSYKSLYKATNGFVKDALVGKGGFGKVYKGTLPGGRHIAVKRLSHDAEQGMKQFVAEVVTMGNIQHRNLVPLLGYCRRKGELLLVSEYMSNGSLDQYLFYNQNPSPSWLQRISILKDIASALNYLHSGANPAVLHRDIKASNVMLDSEYNGRLGDFGMAKFQDPQGNLSATAAVGTIGYMAPELIRTGTSKETDVYAFGIFLLEVTCGRRPFEPELPVQKKYLVKWVCECWKQASLLETRDPKLGREFLSEEVEMVLKLGLLCTNDVPESRPDMGQVMQYLSQKQPLPDFSADSPGIGGFMPVSVEPSSTIGIPDSSMHVTHSILEGYGR.

Residues 1-21 (MDCRLHLVLFFSCVCLICLSG) form the signal peptide. Over 22 to 294 (QQETGFVYNG…PREEKKKLHP (273 aa)) the chain is Extracellular. The tract at residues 24-257 (ETGFVYNGFH…NQYILGWSFS (234 aa)) is legume-lectin like. N-linked (GlcNAc...) asparagine glycans are attached at residues Asn-55, Asn-110, Asn-124, Asn-128, Asn-181, Asn-204, and Asn-225. Residues 295–315 (LLIGLVILLVIPVLMVLGGVY) form a helical membrane-spanning segment. The Cytoplasmic portion of the chain corresponds to 316 to 667 (WYRRKKYAEV…THSILEGYGR (352 aa)). Positions 350–625 (FVKDALVGKG…QYLSQKQPLP (276 aa)) constitute a Protein kinase domain. ATP-binding positions include 356 to 364 (VGKGGFGKV) and Lys-378. Asp-474 functions as the Proton acceptor in the catalytic mechanism.

In the C-terminal section; belongs to the protein kinase superfamily. Ser/Thr protein kinase family. The protein in the N-terminal section; belongs to the leguminous lectin family.

Its subcellular location is the cell membrane. The catalysed reaction is L-seryl-[protein] + ATP = O-phospho-L-seryl-[protein] + ADP + H(+). It catalyses the reaction L-threonyl-[protein] + ATP = O-phospho-L-threonyl-[protein] + ADP + H(+). This is Putative L-type lectin-domain containing receptor kinase I.4 (LECRK14) from Arabidopsis thaliana (Mouse-ear cress).